Reading from the N-terminus, the 283-residue chain is Formamidopyrimidine-DNA glycosylase (283 aa).

Pro-2 acts as the Schiff-base intermediate with DNA in catalysis. Catalysis depends on Glu-3, which acts as the Proton donor. Lys-58 acts as the Proton donor; for beta-elimination activity in catalysis. 3 residues coordinate DNA: His-100, Arg-119, and Lys-162. An FPG-type zinc finger spans residues 247–283 (RVYGREGQRCQTPDCAEKILRKVQSGRSSFYCPACQR). The active-site Proton donor; for delta-elimination activity is the Arg-273.

The protein belongs to the FPG family. Monomer. The cofactor is Zn(2+).

It catalyses the reaction Hydrolysis of DNA containing ring-opened 7-methylguanine residues, releasing 2,6-diamino-4-hydroxy-5-(N-methyl)formamidopyrimidine.. The catalysed reaction is 2'-deoxyribonucleotide-(2'-deoxyribose 5'-phosphate)-2'-deoxyribonucleotide-DNA = a 3'-end 2'-deoxyribonucleotide-(2,3-dehydro-2,3-deoxyribose 5'-phosphate)-DNA + a 5'-end 5'-phospho-2'-deoxyribonucleoside-DNA + H(+). Its function is as follows. Involved in base excision repair of DNA damaged by oxidation or by mutagenic agents. Acts as a DNA glycosylase that recognizes and removes damaged bases. Has a preference for oxidized purines, such as 7,8-dihydro-8-oxoguanine (8-oxoG). Has AP (apurinic/apyrimidinic) lyase activity and introduces nicks in the DNA strand. Cleaves the DNA backbone by beta-delta elimination to generate a single-strand break at the site of the removed base with both 3'- and 5'-phosphates. This is Formamidopyrimidine-DNA glycosylase from Jannaschia sp. (strain CCS1).